The primary structure comprises 536 residues: MAAVAAPMASKPRGSKAESFVDNKRREDIRFANINSARAVSDAVRTSLGPKGMDKMISTANGEVIITNDGATILNKMEVLQPAAKMLVELSKSQDSAAGDGTTTVVVIAGALLKECQSLLTNGIHPTVISDSLHKACGKAIDILTAMAVPVELTDRDSLVKSASTSLNSKVVSQYSTLLAPLAVDAVLSVIDPEKPEIVDLRDIKIVKKLGGTVDDTHTVKGLVFDKKVSRAAGGPTRVENAKIAVIQFQISPPKTDIEQSIVVSDYTQMDRILKEERNYILGMIKKIKATGCNVLLIQKSILRDAVTDLSLHYLAKAKIMVIKDVERDEIEFVTKTLNCLPIANIEHFRAEKLGHADLVEEASLGDGKILKITGIKDMGRTTSVLVRGSNQLVLDEAERSLHDALCVVRCLVSKRFLIAGGGAPEIELSRQLGAWAKVLHGMEGYCVKSFAEALEVIPYTLAENAGLNPIAIVTELRNKHAQGEINAGINVRKGQITNILEENVVQPLLVSTSAITLATECVRMILKIDDIVTVR.

Residues 1–21 (MAAVAAPMASKPRGSKAESFV) are disordered.

It belongs to the TCP-1 chaperonin family. As to quaternary structure, heterooligomeric complex of about 850 to 900 kDa that forms two stacked rings, 12 to 16 nm in diameter.

The protein localises to the cytoplasm. Its function is as follows. Molecular chaperone; assists the folding of proteins upon ATP hydrolysis. Known to play a role, in vitro, in the folding of actin and tubulin. The polypeptide is T-complex protein 1 subunit delta (Arabidopsis thaliana (Mouse-ear cress)).